Reading from the N-terminus, the 284-residue chain is Cell wall mannoprotein 1 (284 aa).

Residues 1–17 form the signal peptide; that stretch reads MRFSALLVTLGLTGALA. The span at 176–234 shows a compositional bias: low complexity; the sequence is SSTGTASSSAPATETATATETSTATGTVTETATSTPVIPTGTASGSASATPSTTATPTT. The tract at residues 176-252 is disordered; that stretch reads SSTGTASSSA…SSTGTATAST (77 aa).

This sequence belongs to the cell wall mannoprotein 1 family. Galactomannoprotein, glycosylated.

The protein localises to the secreted. It localises to the cell wall. Functionally, constitutive protein of the cell wall. Antigen target of host humoral immune response. This Aspergillus fumigatus (Neosartorya fumigata) protein is Cell wall mannoprotein 1.